A 108-amino-acid chain; its full sequence is Iron-sulfur cluster assembly protein CyaY (108 aa).

The protein belongs to the frataxin family.

Its function is as follows. Involved in iron-sulfur (Fe-S) cluster assembly. May act as a regulator of Fe-S biogenesis. In Burkholderia cenocepacia (strain ATCC BAA-245 / DSM 16553 / LMG 16656 / NCTC 13227 / J2315 / CF5610) (Burkholderia cepacia (strain J2315)), this protein is Iron-sulfur cluster assembly protein CyaY.